The chain runs to 411 residues: Cytochrome P450 monooxygenase sirE (411 aa).

Residues N12 and N149 are each glycosylated (N-linked (GlcNAc...) asparagine). The helical transmembrane segment at 181-203 (FLNVISIFTVMMASLNVLYDILA) threads the bilayer. The N-linked (GlcNAc...) asparagine glycan is linked to N342. Residue C352 coordinates heme.

This sequence belongs to the cytochrome P450 family. Heme is required as a cofactor.

The protein resides in the membrane. The protein operates within mycotoxin biosynthesis. Cytochrome P450 monooxygenase; part of the gene cluster that mediates the biosynthesis of sirodesmin PL, an epipolythiodioxopiperazine (ETP) characterized by a disulfide bridged cyclic dipeptide and that acts as a phytotoxin which is involved in the blackleg didease of canola. SirD catalyzes the O-prenylation of L-tyrosine (L-Tyr) in the presence of dimethylallyl diphosphate (DMAPP) to yield 4-O-dimethylallyl-L-Tyr, and therefore represents probably the first pathway-specific enzyme in the biosynthesis of sirodesmin PL. 4-O-dimethylallyl-L-Tyr, then undergoes condensation with L-Ser in a reaction catalyzed by the non-ribosomal peptide synthase sirP to form the diketopiperazine (DKP) backbone. Further bishydroxylation of the DKP performed by the cytochrome P450 monooxygenase sirC leads to the production of the intermediate phomamide. This step is essential to form the reactive thiol group required for toxicity of sirodesmin PL. The next steps of sirodesmin biosynthesis are not well understood yet, but some predictions could be made from intermediate compounds identification. Phomamide is converted into phomalizarine via oxidation, probably by sirT. Further oxidation, methylation (by sirM or sirN) and reduction steps convert phomalizarine to deacetyl sirodesmin. Finally, acetyltransferase sirH probably acetylates deacetyl sirodesmin to produce sirodesmin PL. The sequence is that of Cytochrome P450 monooxygenase sirE from Leptosphaeria maculans (Blackleg fungus).